The following is a 207-amino-acid chain: High frequency lysogenization protein HflD homolog (207 aa).

Belongs to the HflD family.

It localises to the cytoplasm. It is found in the cell inner membrane. This chain is High frequency lysogenization protein HflD homolog, found in Tolumonas auensis (strain DSM 9187 / NBRC 110442 / TA 4).